We begin with the raw amino-acid sequence, 235 residues long: Ubiquinone/menaquinone biosynthesis C-methyltransferase UbiE (235 aa).

Positions 60 and 81 each coordinate S-adenosyl-L-methionine.

It belongs to the class I-like SAM-binding methyltransferase superfamily. MenG/UbiE family.

It carries out the reaction a 2-demethylmenaquinol + S-adenosyl-L-methionine = a menaquinol + S-adenosyl-L-homocysteine + H(+). The enzyme catalyses a 2-methoxy-6-(all-trans-polyprenyl)benzene-1,4-diol + S-adenosyl-L-methionine = a 5-methoxy-2-methyl-3-(all-trans-polyprenyl)benzene-1,4-diol + S-adenosyl-L-homocysteine + H(+). It functions in the pathway quinol/quinone metabolism; menaquinone biosynthesis; menaquinol from 1,4-dihydroxy-2-naphthoate: step 2/2. It participates in cofactor biosynthesis; ubiquinone biosynthesis. Its function is as follows. Methyltransferase required for the conversion of demethylmenaquinol (DMKH2) to menaquinol (MKH2) and the conversion of 2-polyprenyl-6-methoxy-1,4-benzoquinol (DDMQH2) to 2-polyprenyl-3-methyl-6-methoxy-1,4-benzoquinol (DMQH2). The sequence is that of Ubiquinone/menaquinone biosynthesis C-methyltransferase UbiE from Geotalea uraniireducens (strain Rf4) (Geobacter uraniireducens).